The primary structure comprises 217 residues: Protein TNT (217 aa).

Residues 1–217 (MSLVPGQHCS…HSTKQTGGKE (217 aa)) are disordered. Polar residues-rich tracts occupy residues 20–36 (SPIT…TEFS) and 45–61 (TSPQ…SQGP). 2 stretches are compositionally biased toward low complexity: residues 91–104 (EPSL…LQSP) and 128–139 (QSSESHVSSVQH). Polar residues-rich tracts occupy residues 177–191 (RLNT…SQLG) and 207–217 (AHSTKQTGGKE).

Preferentially expressed in teratocarcinoma rather than in normal testis.

The sequence is that of Protein TNT (C16orf82) from Homo sapiens (Human).